The chain runs to 618 residues: 1-deoxy-D-xylulose-5-phosphate synthase (618 aa).

Residues His76 and 117–119 each bind thiamine diphosphate; that span reads GHS. Asp148 provides a ligand contact to Mg(2+). Thiamine diphosphate is bound by residues 149 to 150, Asn177, Tyr284, and Glu366; that span reads GA. Position 177 (Asn177) interacts with Mg(2+).

It belongs to the transketolase family. DXPS subfamily. As to quaternary structure, homodimer. Mg(2+) is required as a cofactor. The cofactor is thiamine diphosphate.

The catalysed reaction is D-glyceraldehyde 3-phosphate + pyruvate + H(+) = 1-deoxy-D-xylulose 5-phosphate + CO2. The protein operates within metabolic intermediate biosynthesis; 1-deoxy-D-xylulose 5-phosphate biosynthesis; 1-deoxy-D-xylulose 5-phosphate from D-glyceraldehyde 3-phosphate and pyruvate: step 1/1. In terms of biological role, catalyzes the acyloin condensation reaction between C atoms 2 and 3 of pyruvate and glyceraldehyde 3-phosphate to yield 1-deoxy-D-xylulose-5-phosphate (DXP). This Dechloromonas aromatica (strain RCB) protein is 1-deoxy-D-xylulose-5-phosphate synthase.